Here is a 243-residue protein sequence, read N- to C-terminus: Protein GrpE (243 aa).

It belongs to the GrpE family. As to quaternary structure, homodimer.

The protein localises to the cytoplasm. In terms of biological role, participates actively in the response to hyperosmotic and heat shock by preventing the aggregation of stress-denatured proteins, in association with DnaK and GrpE. It is the nucleotide exchange factor for DnaK and may function as a thermosensor. Unfolded proteins bind initially to DnaJ; upon interaction with the DnaJ-bound protein, DnaK hydrolyzes its bound ATP, resulting in the formation of a stable complex. GrpE releases ADP from DnaK; ATP binding to DnaK triggers the release of the substrate protein, thus completing the reaction cycle. Several rounds of ATP-dependent interactions between DnaJ, DnaK and GrpE are required for fully efficient folding. This chain is Protein GrpE, found in Mycoplasma mobile (strain ATCC 43663 / 163K / NCTC 11711) (Mesomycoplasma mobile).